The primary structure comprises 314 residues: Ribosomal protein L11 methyltransferase (314 aa).

Residues threonine 161, glycine 182, aspartate 204, and asparagine 248 each coordinate S-adenosyl-L-methionine.

This sequence belongs to the methyltransferase superfamily. PrmA family.

The protein localises to the cytoplasm. It catalyses the reaction L-lysyl-[protein] + 3 S-adenosyl-L-methionine = N(6),N(6),N(6)-trimethyl-L-lysyl-[protein] + 3 S-adenosyl-L-homocysteine + 3 H(+). Methylates ribosomal protein L11. This is Ribosomal protein L11 methyltransferase from Listeria monocytogenes serotype 1/2a (strain 10403S).